The following is an 80-amino-acid chain: Large ribosomal subunit protein uL30 (80 aa).

It belongs to the universal ribosomal protein uL30 family. As to quaternary structure, part of the 50S ribosomal subunit.

The protein is Large ribosomal subunit protein uL30 of Vesicomyosocius okutanii subsp. Calyptogena okutanii (strain HA).